Reading from the N-terminus, the 310-residue chain is Tagatose-6-phosphate kinase (310 aa).

This sequence belongs to the carbohydrate kinase PfkB family. LacC subfamily.

It carries out the reaction D-tagatofuranose 6-phosphate + ATP = D-tagatofuranose 1,6-bisphosphate + ADP + H(+). It functions in the pathway carbohydrate metabolism; D-tagatose 6-phosphate degradation; D-glyceraldehyde 3-phosphate and glycerone phosphate from D-tagatose 6-phosphate: step 1/2. The chain is Tagatose-6-phosphate kinase from Staphylococcus aureus (strain MRSA252).